The chain runs to 715 residues: Polyribonucleotide nucleotidyltransferase (715 aa).

Mg(2+) contacts are provided by Asp-488 and Asp-494. In terms of domain architecture, KH spans 555-614; sequence PKIETIKIPVDKIREVIGSGGKVIREIVEKTGAKIDIGEDGTIKIAAAEQTKIDAAKEWI. The region spanning 624 to 692 is the S1 motif domain; that stretch reads GQIYTGKVVK…DRGKTRLSMK (69 aa). A disordered region spans residues 692–715; that stretch reads KVVDQETGEDLSKSNEKAEEPADA. Positions 701–715 are enriched in basic and acidic residues; the sequence is DLSKSNEKAEEPADA.

It belongs to the polyribonucleotide nucleotidyltransferase family. Requires Mg(2+) as cofactor.

The protein resides in the cytoplasm. The catalysed reaction is RNA(n+1) + phosphate = RNA(n) + a ribonucleoside 5'-diphosphate. Its function is as follows. Involved in mRNA degradation. Catalyzes the phosphorolysis of single-stranded polyribonucleotides processively in the 3'- to 5'-direction. The protein is Polyribonucleotide nucleotidyltransferase of Phenylobacterium zucineum (strain HLK1).